A 135-amino-acid chain; its full sequence is Large ribosomal subunit protein uL16c (135 aa).

Residues 1-17 show a composition bias toward basic residues; sequence MLSPKRTKFRKQHRNRM. Positions 1 to 22 are disordered; sequence MLSPKRTKFRKQHRNRMNGKAS.

It belongs to the universal ribosomal protein uL16 family. As to quaternary structure, part of the 50S ribosomal subunit.

Its subcellular location is the plastid. The protein localises to the chloroplast. The sequence is that of Large ribosomal subunit protein uL16c from Gracilaria tenuistipitata (Red alga).